Here is a 396-residue protein sequence, read N- to C-terminus: Ribose-phosphate pyrophosphokinase 1, chloroplastic (396 aa).

Residues Met1–Arg36 constitute a chloroplast transit peptide. Asp204, His206, Asp215, and Asp219 together coordinate Mg(2+). Residues Gly290–Thr305 form a binding of phosphoribosylpyrophosphate region.

Belongs to the ribose-phosphate pyrophosphokinase family. The cofactor is Mg(2+).

It is found in the plastid. The protein localises to the chloroplast. It catalyses the reaction D-ribose 5-phosphate + ATP = 5-phospho-alpha-D-ribose 1-diphosphate + AMP + H(+). The sequence is that of Ribose-phosphate pyrophosphokinase 1, chloroplastic from Oryza sativa subsp. japonica (Rice).